A 196-amino-acid polypeptide reads, in one-letter code: SERTA domain-containing protein 3 (196 aa).

The interval 1-21 is disordered; sequence MVGGLKRKHSDLEEEEERWEW. Residues 26–73 enclose the SERTA domain; it reads LQSYQQALLRISLDKVQRSLGPRAPSLRRHVLIHNTLQQLQAALRLAP. A disordered region spans residues 104–125; it reads TSMDGTEPPQNPVTPLGLQNEV.

As to quaternary structure, interacts with RPA2. In terms of assembly, (Microbial infection) Interacts with influenza virus PA, PB1 and PB2,leading to inhibition of RdRp complex assembly. (Microbial infection) Interacts with zika virus capsid protein.

The protein resides in the nucleus. Its function is as follows. Antiviral interferon-stimulated protein that plays a role in innate immunity and in the suppression of viruses through different mechanisms. Plays a role in the late phase response of TLR-induced immune effector expression. During influenza infection, interacts with PB2, PB1, and PA to disrupt the formation of the viral RdRp complex. Inhibits zika virus by interacting with the capsid protein in the nucleolus and reducing its abundance through proteasomal degradation. Strong transcriptional coactivator. The protein is SERTA domain-containing protein 3 (SERTAD3) of Homo sapiens (Human).